Reading from the N-terminus, the 302-residue chain is N-acetylmuramic acid 6-phosphate etherase (302 aa).

The 164-residue stretch at 57–220 folds into the SIS domain; the sequence is IADRFRSNGR…TTGAMIRIGK (164 aa). Catalysis depends on glutamate 85, which acts as the Proton donor. The active site involves glutamate 116.

Belongs to the GCKR-like family. MurNAc-6-P etherase subfamily. As to quaternary structure, homodimer.

It carries out the reaction N-acetyl-D-muramate 6-phosphate + H2O = N-acetyl-D-glucosamine 6-phosphate + (R)-lactate. The protein operates within amino-sugar metabolism; N-acetylmuramate degradation. Functionally, specifically catalyzes the cleavage of the D-lactyl ether substituent of MurNAc 6-phosphate, producing GlcNAc 6-phosphate and D-lactate. This Rhodopirellula baltica (strain DSM 10527 / NCIMB 13988 / SH1) protein is N-acetylmuramic acid 6-phosphate etherase.